The chain runs to 526 residues: Lysine--tRNA ligase (526 aa).

Residues E431 and E438 each contribute to the Mg(2+) site.

This sequence belongs to the class-II aminoacyl-tRNA synthetase family. As to quaternary structure, homodimer. Requires Mg(2+) as cofactor.

It is found in the cytoplasm. The catalysed reaction is tRNA(Lys) + L-lysine + ATP = L-lysyl-tRNA(Lys) + AMP + diphosphate. The polypeptide is Lysine--tRNA ligase (Chlamydia felis (strain Fe/C-56) (Chlamydophila felis)).